Here is a 285-residue protein sequence, read N- to C-terminus: Small ribosomal subunit biogenesis GTPase RsgA (285 aa).

The region spanning Lys-61–Phe-215 is the CP-type G domain. GTP is bound by residues Thr-110–Asp-113 and Gly-159–Ser-167. 4 residues coordinate Zn(2+): Cys-239, Cys-244, His-246, and Cys-254.

Belongs to the TRAFAC class YlqF/YawG GTPase family. RsgA subfamily. Monomer. Associates with 30S ribosomal subunit, binds 16S rRNA. Zn(2+) is required as a cofactor.

It is found in the cytoplasm. Functionally, one of several proteins that assist in the late maturation steps of the functional core of the 30S ribosomal subunit. Helps release RbfA from mature subunits. May play a role in the assembly of ribosomal proteins into the subunit. Circularly permuted GTPase that catalyzes slow GTP hydrolysis, GTPase activity is stimulated by the 30S ribosomal subunit. This chain is Small ribosomal subunit biogenesis GTPase RsgA, found in Mesomycoplasma hyopneumoniae (strain J / ATCC 25934 / NCTC 10110) (Mycoplasma hyopneumoniae).